A 193-amino-acid chain; its full sequence is Transmembrane protein 066L (193 aa).

Helical transmembrane passes span 14-34 (VLFA…GLVW) and 48-68 (LVVE…LVVV).

Belongs to the IIV-6 357R family.

The protein resides in the membrane. This Invertebrate iridescent virus 3 (IIV-3) protein is Transmembrane protein 066L.